A 429-amino-acid chain; its full sequence is MSKPMTMSQKILAYHAGKEYVEPGDLIFANVDLVLGNDVTTPVAIKEFEKIGVDKVFDKDKITIVPDHFTPNKDIKSAQQCKMVREFAKKYDITNYFEVGEMGIEHALLPEKGLVVPGDLVIGADSHTCTYGALGAFSTGIGSTDMACAMATGKCWFKVPEAIKFVLYGKKTGWTSGKDIILHIIGMIGVDGALYKSMEYTGEGLKSLSMDDRFTIANMAIEAGAKNGIFEVDEKTIEYVKQHSTKPYKIFKADEDAEYSEVYEIDISKIRPTVAFPHLPENTKTIDEITEKIYIDQVVIGSCTNGRIEDLRIAAKILKGRKVKKGLRCIIFPATQNIYKQALKEGLIEIFIDAGCVVSTPTCGPCLGGHMGILAEGERALATTNRNFVGRMGHPNSEVYLSSPAIAAASAVLGYIGSPEELGMKGDEE.

Residues C303, C363, and C366 each contribute to the [4Fe-4S] cluster site.

It belongs to the aconitase/IPM isomerase family. LeuC type 2 subfamily. Heterodimer of LeuC and LeuD. [4Fe-4S] cluster is required as a cofactor.

The enzyme catalyses (2R,3S)-3-isopropylmalate = (2S)-2-isopropylmalate. Its pathway is amino-acid biosynthesis; L-leucine biosynthesis; L-leucine from 3-methyl-2-oxobutanoate: step 2/4. Catalyzes the isomerization between 2-isopropylmalate and 3-isopropylmalate, via the formation of 2-isopropylmaleate. The protein is 3-isopropylmalate dehydratase large subunit of Caldicellulosiruptor saccharolyticus (strain ATCC 43494 / DSM 8903 / Tp8T 6331).